Reading from the N-terminus, the 718-residue chain is Sodium/myo-inositol cotransporter (718 aa).

Over 1 to 9 the chain is Extracellular; it reads MRAVLETAD. The helical transmembrane segment at 10–29 threads the bilayer; that stretch reads IAIVALYFILVMCIGFFAMW. Residues 30–38 are Cytoplasmic-facing; it reads KSNRSTVSG. The chain crosses the membrane as a helical span at residues 39-57; sequence YFLAGRSMTWVAIGASLFV. Residues 58 to 86 are Extracellular-facing; that stretch reads SNIGSEHFIGLAGSGAASGFAVGAWEFNA. A helical transmembrane segment spans residues 87-110; sequence LLLLQLLGWVFIPIYIRSGVYTMP. Over 111–123 the chain is Cytoplasmic; sequence EYLSKRFGGHRIQ. A helical membrane pass occupies residues 124-144; it reads VYFAALSLILYIFTKLSVDLY. Topologically, residues 145–157 are extracellular; the sequence is SGALFIQESMGWN. A helical transmembrane segment spans residues 158–183; it reads LYVSVILLIGMTALLTVTGGLVAVIY. Over 184 to 186 the chain is Cytoplasmic; it reads TDT. The helical transmembrane segment at 187-205 threads the bilayer; sequence LQALLMIVGALTLMVISMM. Over 206–303 the chain is Extracellular; that stretch reads EIGGFEEVKR…HAKGSTLMAG (98 aa). The N-linked (GlcNAc...) asparagine glycan is linked to Asn232. A helical membrane pass occupies residues 304-324; that stretch reads FLKLLPMFIIVVPGMISRILF. Residues 325 to 353 are Cytoplasmic-facing; that stretch reads ADDIACINPEHCMQVCGSRAGCSNIAYPR. A helical transmembrane segment spans residues 354 to 376; that stretch reads LVMKLVPVGLRGLMMAVMIAALM. Residues 377 to 406 are Extracellular-facing; sequence SDLDSIFNSASTIFTLDVYKLIRKSASSRE. Residues 407–430 form a helical membrane-spanning segment; sequence LMIVGRIFVAFMVVISIAWVPIIV. The Cytoplasmic portion of the chain corresponds to 431-443; the sequence is EMQGGQMYLYIQE. Residues 444 to 462 traverse the membrane as a helical segment; the sequence is VADYLTPPVAALFLLAIFW. Topologically, residues 463–510 are extracellular; that stretch reads KRCNEQGAFYGGMAGFILVVVRLTLAFAYRAPECDQPDNRPVFIKDIH. The helical transmembrane segment at 511 to 532 threads the bilayer; sequence YMYVATALFWITGLITVIVSLL. Residues 533 to 695 are Cytoplasmic-facing; that stretch reads TPPPTKEQIR…QMLEEPPQVK (163 aa). Phosphoserine is present on residues Ser594 and Ser632. The helical transmembrane segment at 696–716 threads the bilayer; the sequence is VILNIGLFGVCSLGIFMFVYF. At 717–718 the chain is on the extracellular side; it reads SL.

It belongs to the sodium:solute symporter (SSF) (TC 2.A.21) family. Interacts with KCNQ2 (via the pore module). Interacts with KCNQ1; this interaction is direct. Forms coregulatory complexes with ion channels KCNQ2-KCNQ3 and KCNQ1-KCNE2.

It localises to the apical cell membrane. The protein localises to the basolateral cell membrane. Its function is as follows. Electrogenic Na(+)-coupled sugar symporter that actively transports myo-inositol and its stereoisomer scyllo-inositol across the plasma membrane, with a Na(+) to sugar coupling ratio of 2:1. Maintains myo-inositol concentration gradient that defines cell volume and fluid balance during osmotic stress, in particular in the fetoplacental unit and central nervous system. Forms coregulatory complexes with voltage-gated K(+) ion channels, allosterically altering ion selectivity, voltage dependence and gating kinetics of the channel. In turn, K(+) efflux through the channel forms a local electrical gradient that modulates electrogenic Na(+)-coupled myo-inositol influx through the transporter. Associates with KCNQ1-KCNE2 channel in the apical membrane of choroid plexus epithelium and regulates the myo-inositol gradient between blood and cerebrospinal fluid with an impact on neuron excitability. Associates with KCNQ2-KCNQ3 channel altering ion selectivity, increasing Na(+) and Cs(+) permeation relative to K(+) permeation. Provides myo-inositol precursor for biosynthesis of phosphoinositides such as PI(4,5)P2, thus indirectly affecting the activity of phosphoinositide-dependent ion channels and Ca(2+) signaling upon osmotic stress. The chain is Sodium/myo-inositol cotransporter (SLC5A3) from Bos taurus (Bovine).